Reading from the N-terminus, the 99-residue chain is ATP-dependent Clp protease adapter protein ClpS (99 aa).

Belongs to the ClpS family. In terms of assembly, binds to the N-terminal domain of the chaperone ClpA.

Its function is as follows. Involved in the modulation of the specificity of the ClpAP-mediated ATP-dependent protein degradation. In Acetivibrio thermocellus (strain ATCC 27405 / DSM 1237 / JCM 9322 / NBRC 103400 / NCIMB 10682 / NRRL B-4536 / VPI 7372) (Clostridium thermocellum), this protein is ATP-dependent Clp protease adapter protein ClpS.